The chain runs to 894 residues: Protein translocase subunit SecA (894 aa).

ATP-binding positions include glutamine 87, 105–109 (GEGKT), and aspartate 512. The disordered stretch occupies residues 857 to 894 (FNLGDEPEAQQPVTSKKVGRNEPCPCGSGKKYKQCCGK). Positions 880, 882, 891, and 892 each coordinate Zn(2+).

This sequence belongs to the SecA family. Monomer and homodimer. Part of the essential Sec protein translocation apparatus which comprises SecA, SecYEG and auxiliary proteins SecDF-YajC and YidC. The cofactor is Zn(2+).

The protein localises to the cell inner membrane. It is found in the cytoplasm. It carries out the reaction ATP + H2O + cellular proteinSide 1 = ADP + phosphate + cellular proteinSide 2.. Functionally, part of the Sec protein translocase complex. Interacts with the SecYEG preprotein conducting channel. Has a central role in coupling the hydrolysis of ATP to the transfer of proteins into and across the cell membrane, serving as an ATP-driven molecular motor driving the stepwise translocation of polypeptide chains across the membrane. The protein is Protein translocase subunit SecA of Geotalea uraniireducens (strain Rf4) (Geobacter uraniireducens).